The sequence spans 394 residues: Sugar efflux transporter C (394 aa).

The Periplasmic segment spans residues 1 to 10 (MQKTATTPSK). The helical transmembrane segment at 11–31 (ILDLTAAAFLLVAFLTGIAGA) threads the bilayer. The Cytoplasmic portion of the chain corresponds to 32–49 (LQTPTLSIFLADELKARP). A helical membrane pass occupies residues 50-70 (IMVGFFFTGSAIMGILVSQFL). Residues 71 to 80 (ARHSDKQGDR) are Periplasmic-facing. A helical membrane pass occupies residues 81–101 (KLLILLCCLFGVLACTLFAWN). Over 102–104 (RNY) the chain is Cytoplasmic. A helical transmembrane segment spans residues 105 to 125 (FILLSTGVLLSSFASTANPQM). Residues 126-150 (FALAREHADRTGRETVMFSTFLRAQ) are Periplasmic-facing. The chain crosses the membrane as a helical span at residues 151–171 (ISLAWVIGPPLAYELAMGFSF). Position 172 (lysine 172) is a topological domain, cytoplasmic. A helical membrane pass occupies residues 173 to 193 (VMYLTAAIAFVVCGLIVWLFL). Residues 194–224 (PSIQRNIPVVTQPVEILPSTHRKRDTRLLFV) lie on the Periplasmic side of the membrane. Residues 225–245 (VCSMMWAANNLYMINMPLFII) form a helical membrane-spanning segment. The Cytoplasmic segment spans residues 246–253 (DELHLTDK). The chain crosses the membrane as a helical span at residues 254–274 (LTGEMIGIAAGLEIPMMLIAG). Residues 275–283 (YYMKRIGKR) lie on the Periplasmic side of the membrane. Residues 284–304 (LLMLIAIVSGMCFYASVLMAT) form a helical membrane-spanning segment. The Cytoplasmic portion of the chain corresponds to 305–310 (TPAVEL). Residues 311-331 (ELQILNAIFLGILCGIGMLYF) form a helical membrane-spanning segment. Residues 332–370 (QDLMPEKIGSATTLYANTSRVGWIIAGSVDGIMVEIWSY) lie on the Periplasmic side of the membrane. Residues 371 to 391 (HALFWLAIGMLGIAMICLLFI) traverse the membrane as a helical segment. The Cytoplasmic portion of the chain corresponds to 392-394 (KDI).

It belongs to the major facilitator superfamily. Set transporter family.

The protein resides in the cell inner membrane. Involved in the efflux of sugars. The physiological role may be the detoxification of non-metabolizable sugar analogs. The sequence is that of Sugar efflux transporter C (setC) from Escherichia coli (strain K12).